We begin with the raw amino-acid sequence, 166 residues long: Large ribosomal subunit protein bL9 (166 aa).

This sequence belongs to the bacterial ribosomal protein bL9 family.

In terms of biological role, binds to the 23S rRNA. The chain is Large ribosomal subunit protein bL9 from Borrelia garinii subsp. bavariensis (strain ATCC BAA-2496 / DSM 23469 / PBi) (Borreliella bavariensis).